The following is a 211-amino-acid chain: MRFVFLGPPGAGKGTLAGEISGRCGVVHISTGGILRAAIQKQTALGKKVQKVVEVGGLVDDQTVTELVRERVSHEDVVSGFILDGFPRTVTQARCLEDIVPIDYAVSIVVPDDVLVARLTGRRVCSACGSSYHVLFAQPKREGVCDRCRGVLVVREDDKMSAILQRLTAYRAQAEPIVHFYSERGKLVSLNGAPPISDVVLEFQERFAQSR.

10–15 (GAGKGT) contributes to the ATP binding site. The tract at residues 30–59 (STGGILRAAIQKQTALGKKVQKVVEVGGLV) is NMP. Residues T31, R36, 57–59 (GLV), 85–88 (GFPR), and Q92 contribute to the AMP site. The segment at 121 to 158 (GRRVCSACGSSYHVLFAQPKREGVCDRCRGVLVVREDD) is LID. Position 122 (R122) interacts with ATP. Zn(2+)-binding residues include C125 and C128. 131-132 (SY) is an ATP binding site. Residues C145 and C148 each contribute to the Zn(2+) site. AMP contacts are provided by R155 and R166. P194 contacts ATP.

This sequence belongs to the adenylate kinase family. In terms of assembly, monomer.

It localises to the cytoplasm. The enzyme catalyses AMP + ATP = 2 ADP. It participates in purine metabolism; AMP biosynthesis via salvage pathway; AMP from ADP: step 1/1. Functionally, catalyzes the reversible transfer of the terminal phosphate group between ATP and AMP. Plays an important role in cellular energy homeostasis and in adenine nucleotide metabolism. The polypeptide is Adenylate kinase (Treponema pallidum (strain Nichols)).